We begin with the raw amino-acid sequence, 227 residues long: Cytidylate kinase (227 aa).

Position 12 to 20 (Gly-12 to Thr-20) interacts with ATP.

It belongs to the cytidylate kinase family. Type 1 subfamily.

Its subcellular location is the cytoplasm. It carries out the reaction CMP + ATP = CDP + ADP. The catalysed reaction is dCMP + ATP = dCDP + ADP. This is Cytidylate kinase from Enterobacter sp. (strain 638).